The following is a 335-amino-acid chain: MINSDNQKFSEIRFDWERDEILEILNYPLIDLMWEAQIIHRRFNQYKVQLASLFSVKTGGCEENCSYCSQSIYSSSQIKSHPQFEVEAVLNRAKTAKKEGADRFCMGWAWREIRDGKPFNSMIEMVKGVKELGMEACVTAGMLTDEQALKLADAGLTAYNHNLDTSPEYYKNIITTRTYQDRLETIKRVRNAGINVCCGGIIGLGEDNGDRASLLEVLSNMNPHPESVPINSLVAIEGTGLEGGKEIDSIEMIRMIATARILMPKSKIRLSAGRENLTKEAQILCFQCGANSIFYGDELLTTSNPSFQDDRKLLKDVGVLFNKDFEYCDKTVSTV.

One can recognise a Radical SAM core domain in the interval 46–274; that stretch reads YKVQLASLFS…KSKIRLSAGR (229 aa). Residues cysteine 61, cysteine 65, and cysteine 68 each coordinate [4Fe-4S] cluster. [2Fe-2S] cluster-binding residues include cysteine 105, cysteine 137, cysteine 197, and arginine 269.

The protein belongs to the radical SAM superfamily. Biotin synthase family. Homodimer. Requires [4Fe-4S] cluster as cofactor. It depends on [2Fe-2S] cluster as a cofactor.

The catalysed reaction is (4R,5S)-dethiobiotin + (sulfur carrier)-SH + 2 reduced [2Fe-2S]-[ferredoxin] + 2 S-adenosyl-L-methionine = (sulfur carrier)-H + biotin + 2 5'-deoxyadenosine + 2 L-methionine + 2 oxidized [2Fe-2S]-[ferredoxin]. It participates in cofactor biosynthesis; biotin biosynthesis; biotin from 7,8-diaminononanoate: step 2/2. Functionally, catalyzes the conversion of dethiobiotin (DTB) to biotin by the insertion of a sulfur atom into dethiobiotin via a radical-based mechanism. This Prochlorococcus marinus subsp. pastoris (strain CCMP1986 / NIES-2087 / MED4) protein is Biotin synthase.